Consider the following 633-residue polypeptide: Mini-chromosome maintenance complex-binding protein (633 aa).

The tract at residues 154-198 (PSTSYTPSRHKRSYEEDEDMEQHPSKQKEQHMGSGGDSHGCGEPK) is disordered. The span at 174–184 (EQHPSKQKEQH) shows a compositional bias: basic and acidic residues.

Belongs to the MCMBP family. In terms of assembly, interacts with the MCM complex: associates with the MCM3-7 complex which lacks MCM2, while it does not interact with the MCM complex when MCM2 is present (MCM2-7 complex).

The protein localises to the nucleus. In terms of biological role, associated component of the MCM complex that acts as a regulator of DNA replication. Binds to the MCM complex during late S phase and promotes the disassembly of the MCM complex from chromatin, thereby acting as a key regulator of pre-replication complex (pre-RC) unloading from replicated DNA. Can dissociate the MCM complex without addition of ATP; probably acts by destabilizing interactions of each individual subunits of the MCM complex. Required for sister chromatid cohesion. The protein is Mini-chromosome maintenance complex-binding protein (MCMBP) of Gallus gallus (Chicken).